The chain runs to 853 residues: DNA mismatch repair protein MutS (853 aa).

614-621 serves as a coordination point for ATP; sequence GPNMGGKS.

The protein belongs to the DNA mismatch repair MutS family.

Its function is as follows. This protein is involved in the repair of mismatches in DNA. It is possible that it carries out the mismatch recognition step. This protein has a weak ATPase activity. The chain is DNA mismatch repair protein MutS from Escherichia coli O7:K1 (strain IAI39 / ExPEC).